Reading from the N-terminus, the 335-residue chain is MEKHGPPEHAAYPIPQADYQGSQGPYPGPQGPYPGPQGPYAGPQGPYPGPQGPYAGPQGPYPGPQPGYPVPPGSYAGGDPSGFPVQHQPAYNHPGGPGGTPWMQAPPPPLDCPPGLEYLTQIDQILVHQQIELLEVLTGFETNNKYEIKNSLGQRVYFAVEDTDCCTRNCCGASRPFTLRILDNMGREVMTLERPLRCSSCCFPCCLQEIEIQAPPGVPVGYVIQTWHPCLPKFTLQNEKRQDVLKVVGPCVVCSCCSDIDFELKSLDEESVVGKISKQWSGFVREAFTDADNFGIQFPLDLDVKMKAVMLGACFLIDFMFFERTGNEEQRSGVW.

Positions 1-101 (MEKHGPPEHA…NHPGGPGGTP (101 aa)) are proline-rich domain (PRD). The tract at residues 1-102 (MEKHGPPEHA…HPGGPGGTPW (102 aa)) is disordered. Residues 1 to 305 (MEKHGPPEHA…IQFPLDLDVK (305 aa)) lie on the Cytoplasmic side of the membrane. 6 tandem repeats follow at residues 23–29 (QGPYPGP), 30–36 (QGPYPGP), 37–43 (QGPYAGP), 44–50 (QGPYPGP), 51–57 (QGPYAGP), and 58–64 (QGPYPGP). Residues 23-71 (QGPYPGPQGPYPGPQGPYAGPQGPYPGPQGPYAGPQGPYPGPQPGYPVP) form a 7 X 7 AA tandem repeats of Q-G-P-Y-[AP]-G-P region. The segment covering 26-37 (YPGPQGPYPGPQ) has biased composition (pro residues). Residues 59–72 (GPYPGPQPGYPVPP) are compositionally biased toward pro residues. Residues 64 to 72 (PQPGYPVPP) carry the SH3-binding 1 motif. One copy of the 7; approximate repeat lies at 65-71 (QPGYPVP). A Phosphotyrosine; by ABL modification is found at Y91. The short motif at 101 to 109 (PWMQAPPPP) is the SH3-binding 2 element. At T178 the chain carries Phosphothreonine; by PKC/PRKCD. Residues C201, C202, C205, and C206 are each lipidated (S-palmitoyl cysteine). The short motif at 274-283 (GKISKQWSGF) is the Nuclear localization signal element. The chain crosses the membrane as a helical span at residues 306 to 322 (MKAVMLGACFLIDFMFF). Residues 323–335 (ERTGNEEQRSGVW) lie on the Extracellular side of the membrane.

It belongs to the phospholipid scramblase family. In terms of assembly, forms homooligomers in the presence of calcium. Interacts with ABL. Interacts with RELT, RELL1 and RELL2. Interacts with OXSR1 in the presence of RELT. Interacts with OCLN, TOP2A and TOP2B. Interacts with TRPC1, TRPC4 and TRPC5. Interacts with ILDR1. The cofactor is Ca(2+). Requires Mg(2+) as cofactor. It depends on Zn(2+) as a cofactor. In terms of processing, phosphorylated on tyrosine residues. Phosphorylated by OXSR1 in the presence of RELT. Phosphorylation at Thr-178 by PKC/PKCD increases its phospholipid scramblase activity during both cell stimulation and apoptosis. Post-translationally, palmitoylation is required for its phospholipid scramblase activity. Palmitoylation regulates its localization to the cell membrane or the nucleus; trafficking to the cell membrane is dependent upon palmitoylation whereas in the absence of palmitoylation, localizes to the nucleus.

It localises to the cell membrane. The protein resides in the nucleus. Its subcellular location is the cytoplasm. It is found in the perinuclear region. It carries out the reaction a 1,2-diacyl-sn-glycero-3-phosphocholine(in) = a 1,2-diacyl-sn-glycero-3-phosphocholine(out). It catalyses the reaction a 1,2-diacyl-sn-glycero-3-phosphoethanolamine(in) = a 1,2-diacyl-sn-glycero-3-phosphoethanolamine(out). The enzyme catalyses a 1,2-diacyl-sn-glycero-3-phospho-L-serine(in) = a 1,2-diacyl-sn-glycero-3-phospho-L-serine(out). Catalyzes calcium-induced ATP-independent rapid bidirectional and non-specific distribution of phospholipids (lipid scrambling or lipid flip-flop) between the inner and outer leaflet of the plasma membrane resulting in collapse of the phospholipid asymmetry which leads to phosphatidylserine externalization on the cell surface. Mediates calcium-dependent phosphatidylserine externalization and apoptosis in neurons via its association with TRPC5. Also exhibits magnesium-dependent nuclease activity against double-stranded DNA and RNA but not single-stranded DNA and can enhance DNA decatenation mediated by TOP2A. Negatively regulates FcR-mediated phagocytosis in differentiated macrophages. May contribute to cytokine-regulated cell proliferation and differentiation. The sequence is that of Phospholipid scramblase 1 (Plscr1) from Rattus norvegicus (Rat).